The chain runs to 232 residues: MGEAALAVVKLGGSLLFEDEGSLKEGYVRGFLRELREYLAESNGRVVVVVGGGRYARNYIQLGRRLGVNEGVLDYLGILVSRLNAATMYAAFYNSPPLIPETLLDVHKLLASGLRVVFMGGLQPGQSTTTTAALVAESLNGSLIIATDVEGIYTDDPKRNPAATLMERVSVEELRRMFQREQVAGEYRMIDVLSLNVIQRSKVKVFVLKGDPPGNIFRALRGERVAGTFIEA.

13–14 is a binding site for ATP; sequence GS. UMP is bound at residue Gly-52. Residues Gly-53 and Arg-57 each coordinate ATP. UMP contacts are provided by residues Asp-74 and 122–128; that span reads LQPGQST. Residues Thr-147, Tyr-153, and Asp-156 each coordinate ATP.

It belongs to the UMP kinase family. Homohexamer.

It is found in the cytoplasm. The catalysed reaction is UMP + ATP = UDP + ADP. It participates in pyrimidine metabolism; CTP biosynthesis via de novo pathway; UDP from UMP (UMPK route): step 1/1. Its activity is regulated as follows. Inhibited by UTP. Catalyzes the reversible phosphorylation of UMP to UDP. This is Uridylate kinase from Thermofilum pendens (strain DSM 2475 / Hrk 5).